A 499-amino-acid polypeptide reads, in one-letter code: Protein phosphatase PP2A 55 kDa regulatory subunit (499 aa).

Positions 1–30 are disordered; sequence MGRWGRQSPVLEPPDPQMQTTPPPPTLPPR. Over residues 11-28 the composition is skewed to pro residues; sequence LEPPDPQMQTTPPPPTLP. WD repeat units follow at residues 79–118, 144–185, 228–266, 277–317, 336–374, 391–432, and 467–498; these read TDAD…KAAN, EIEE…KSFG, AHTY…QSYN, ELTE…LCDR, EIIS…KPIE, ENDC…DVTL, and DFNK…FQDK.

Belongs to the phosphatase 2A regulatory subunit B family. In terms of assembly, PP2A exists in several trimeric forms, all of which consist of a core composed of a catalytic subunit associated with a 65 kDa regulatory subunit (PR65) (subunit A). The core complex associates with a third, variable subunit (subunit B), which confers distinct properties to the holoenzyme.

Its function is as follows. Could perform a substrate recognition function or could be responsible for targeting the enzyme complex to the appropriate subcellular compartment. The protein is Protein phosphatase PP2A 55 kDa regulatory subunit (tws) of Drosophila melanogaster (Fruit fly).